The chain runs to 210 residues: Peptidyl-tRNA hydrolase (210 aa).

Tyr15 serves as a coordination point for tRNA. The active-site Proton acceptor is His20. Residues Phe66, Asn68, and Asn114 each contribute to the tRNA site. Positions 186–210 (IHTSKPPRPKPPRREPGDGGTPATA) are disordered.

It belongs to the PTH family. Monomer.

Its subcellular location is the cytoplasm. It carries out the reaction an N-acyl-L-alpha-aminoacyl-tRNA + H2O = an N-acyl-L-amino acid + a tRNA + H(+). In terms of biological role, hydrolyzes ribosome-free peptidyl-tRNAs (with 1 or more amino acids incorporated), which drop off the ribosome during protein synthesis, or as a result of ribosome stalling. Its function is as follows. Catalyzes the release of premature peptidyl moieties from peptidyl-tRNA molecules trapped in stalled 50S ribosomal subunits, and thus maintains levels of free tRNAs and 50S ribosomes. The sequence is that of Peptidyl-tRNA hydrolase from Variovorax paradoxus (strain S110).